Here is a 495-residue protein sequence, read N- to C-terminus: Pentatricopeptide repeat-containing protein PPR5 homolog, chloroplastic (495 aa).

The tract at residues 1–24 (MLAYPTTSSPWPPRHHGAAAAPAA) is disordered. A chloroplast-targeting transit peptide spans 1–29 (MLAYPTTSSPWPPRHHGAAAAPAARRHMA). PPR repeat units follow at residues 120-154 (DNGI…GCRP), 155-189 (DTSV…MKTI), 195-229 (NIVT…PVSP), 230-264 (DIYT…QCRP), 265-299 (DVIT…KEKP), 300-334 (THPT…GFKP), 335-365 (NYVT…LVSS), 370-404 (HLSS…GAVP), and 405-439 (SAST…GIVP). Positions 455 to 495 (DKKPRTVPSKNSASKPDVESANNSGTDTSSKPNLSVWQVAA) are disordered. A compositionally biased stretch (polar residues) spans 462–495 (PSKNSASKPDVESANNSGTDTSSKPNLSVWQVAA).

Belongs to the PPR family. P subfamily.

The protein localises to the plastid. The protein resides in the chloroplast. Involved in the biogenesis of the plastid translation machinery by promoting the splicing of group II introns in chloroplasts. This is Pentatricopeptide repeat-containing protein PPR5 homolog, chloroplastic from Oryza sativa subsp. japonica (Rice).